The following is a 252-amino-acid chain: Ribosomal RNA small subunit methyltransferase J (252 aa).

S-adenosyl-L-methionine-binding positions include 126–127 (ER) and Asp-176.

Belongs to the methyltransferase superfamily. RsmJ family.

It localises to the cytoplasm. It catalyses the reaction guanosine(1516) in 16S rRNA + S-adenosyl-L-methionine = N(2)-methylguanosine(1516) in 16S rRNA + S-adenosyl-L-homocysteine + H(+). Its function is as follows. Specifically methylates the guanosine in position 1516 of 16S rRNA. The polypeptide is Ribosomal RNA small subunit methyltransferase J (Bdellovibrio bacteriovorus (strain ATCC 15356 / DSM 50701 / NCIMB 9529 / HD100)).